Consider the following 425-residue polypeptide: NAC domain-containing protein 10 (425 aa).

Positions methionine 1–serine 10 are enriched in polar residues. The disordered stretch occupies residues methionine 1 to arginine 34. Over residues proline 12–proline 23 the composition is skewed to low complexity. In terms of domain architecture, NAC spans leucine 29–lysine 200. Residues valine 129 to alanine 206 mediate DNA binding.

As to expression, highest expression in stamens. Expressed in leaves.

It is found in the nucleus. Its function is as follows. Transcription factor of the NAC family associated with male fertility. Involved in anther development, but not in senescence. Reduced expression of NAC5 via RNAi leads to male-sterility. In Oryza sativa subsp. japonica (Rice), this protein is NAC domain-containing protein 10.